A 263-amino-acid polypeptide reads, in one-letter code: 3'-5' ssDNA/RNA exonuclease TatD (263 aa).

A divalent metal cation is bound by residues glutamate 91, histidine 127, and histidine 152.

This sequence belongs to the metallo-dependent hydrolases superfamily. TatD-type hydrolase family. TatD subfamily. Monomer. Mg(2+) is required as a cofactor.

It localises to the cytoplasm. In terms of biological role, 3'-5' exonuclease that prefers single-stranded DNA and RNA. May play a role in the H(2)O(2)-induced DNA damage repair. The polypeptide is 3'-5' ssDNA/RNA exonuclease TatD (Cronobacter turicensis (strain DSM 18703 / CCUG 55852 / LMG 23827 / z3032)).